We begin with the raw amino-acid sequence, 305 residues long: Porphobilinogen deaminase (305 aa).

At C240 the chain carries S-(dipyrrolylmethanemethyl)cysteine.

It belongs to the HMBS family. Monomer. Dipyrromethane is required as a cofactor.

It carries out the reaction 4 porphobilinogen + H2O = hydroxymethylbilane + 4 NH4(+). It participates in porphyrin-containing compound metabolism; protoporphyrin-IX biosynthesis; coproporphyrinogen-III from 5-aminolevulinate: step 2/4. Functionally, tetrapolymerization of the monopyrrole PBG into the hydroxymethylbilane pre-uroporphyrinogen in several discrete steps. The sequence is that of Porphobilinogen deaminase (hemC) from Xylella fastidiosa (strain 9a5c).